The chain runs to 443 residues: Exodeoxyribonuclease 7 large subunit (443 aa).

Belongs to the XseA family. In terms of assembly, heterooligomer composed of large and small subunits.

Its subcellular location is the cytoplasm. The catalysed reaction is Exonucleolytic cleavage in either 5'- to 3'- or 3'- to 5'-direction to yield nucleoside 5'-phosphates.. Its function is as follows. Bidirectionally degrades single-stranded DNA into large acid-insoluble oligonucleotides, which are then degraded further into small acid-soluble oligonucleotides. The protein is Exodeoxyribonuclease 7 large subunit of Vibrio vulnificus (strain CMCP6).